We begin with the raw amino-acid sequence, 655 residues long: p-hydroxybenzoic acid efflux pump subunit AaeB (655 aa).

Topologically, residues 1 to 12 (MGIFSIANQHIR) are periplasmic. The helical transmembrane segment at 13–33 (FAVKLATAIVLALFVGFHFQL) threads the bilayer. At 34-37 (ETPR) the chain is on the cytoplasmic side. A helical membrane pass occupies residues 38 to 58 (WAVLTAAIVAAGPAFAAGGEP). The Periplasmic segment spans residues 59-68 (YSGAIRYRGF). The helical transmembrane segment at 69 to 89 (LRIIGTFIGCIAGLVIIIAMI) threads the bilayer. Over 90 to 92 (RAP) the chain is Cytoplasmic. A helical transmembrane segment spans residues 93-113 (LLMILVCCIWAGFCTWISSLV). Residues 114 to 120 (RIENSYA) lie on the Periplasmic side of the membrane. Residues 121-141 (WGLAGYTALIIVITIQPEPLL) form a helical membrane-spanning segment. The Cytoplasmic segment spans residues 142-151 (TPQFAVERCS). A helical transmembrane segment spans residues 152-172 (EIVIGIVCAIMADLLFSPRSI). Topologically, residues 173 to 369 (KQEVDRELES…RTTLSCILGT (197 aa)) are periplasmic. Residues 370–390 (LFWLWTGWTSGSGAMVMIAVV) form a helical membrane-spanning segment. The Cytoplasmic segment spans residues 391–406 (TSLAMRLPNPRMVAID). Residues 407-427 (FIYGTLAALPLGLLYFLVIIP) form a helical membrane-spanning segment. Residues 428–430 (NTQ) lie on the Periplasmic side of the membrane. Residues 431–451 (QSMLLLCISLAVLGFFLGIEV) form a helical membrane-spanning segment. Residues 452-458 (QKRRLGS) lie on the Cytoplasmic side of the membrane. A helical membrane pass occupies residues 459–479 (MGALASTINIIVLDNPMTFHF). Over 480-481 (SQ) the chain is Periplasmic. Residues 482–502 (FLDSALGQIVGCVLAFTVILL) traverse the membrane as a helical segment. Residues 503–655 (VRDKSRDRTG…HKYQHALTDS (153 aa)) lie on the Cytoplasmic side of the membrane.

Belongs to the aromatic acid exporter ArAE (TC 2.A.85) family.

The protein resides in the cell inner membrane. Its function is as follows. Forms an efflux pump with AaeA. Could function as a metabolic relief valve, allowing to eliminate certain compounds when they accumulate to high levels in the cell. This Escherichia coli O6:H1 (strain CFT073 / ATCC 700928 / UPEC) protein is p-hydroxybenzoic acid efflux pump subunit AaeB.